The sequence spans 144 residues: Large ribosomal subunit protein uL13 (144 aa).

The protein belongs to the universal ribosomal protein uL13 family. As to quaternary structure, part of the 50S ribosomal subunit.

Its function is as follows. This protein is one of the early assembly proteins of the 50S ribosomal subunit, although it is not seen to bind rRNA by itself. It is important during the early stages of 50S assembly. The chain is Large ribosomal subunit protein uL13 from Nitrosomonas eutropha (strain DSM 101675 / C91 / Nm57).